The following is a 918-amino-acid chain: MSVPPLLRPPSPLLPAAAAVAAAAAALVPGSGPAPFPAPGAAPAGGISFHLQIGLSREPVLLLQDSSGDYSLAHVREMACSIVDQKFPECGFYGLYDKILLFRHDPASDNILQLVKIASDIQEGDLIEVVLSASATFEDFQIRPHALFVHSYRAPAFCDHCGEMLWGLVRQGLKCEGCGLNYHKRCAFKIPNNCSGVRRRRLSNVSLTGLGTVRTASAEFSTSVPDEPLLSPVSPGFEQKSPSESFIGREKRSNSQSYIGRPIQLDKLLMSKVKVPHTFVIHSYTRPTVCQFCKKLLKGLFRQGLQCKDCRFNCHKRCAPKVPNNCLGEVTINGELLSPGAESDVVMEEGSDDNDSERNSGLMDDMDEAMVQDTEMALAEGQSGGAEMQDPDADQEDSNRTISPSTSNNIPLMRVVQSVKHTKRRSSTVMKEGWMVHYTSKDTLRKRHYWRLDSKCITLFQNDTGSRYYKEIPLSEILCLEPAKPSALTPVGATPHCFEITTANVVYYVGENVVNPSSSPPNNSVLPSGIGPDVARMWEVAIQHALMPVIPKGSSVGSGSNSHKDISVSISVSNCQIQENVDISTVYQIFPDEVLGSGQFGIVYGGKHRKTGRDVAIKIIDKLRFPTKQESQLRNEVAILQNLHHPGVVNLECMFETPERVFVVMEKLHGDMLEMILSSEKGRLPEHITKFLITQILVALRHLHFKNIVHCDLKPENVLLASADPFPQVKLCDFGFARIIGEKSFRRSVVGTPAYLAPEVLRNKGYNRSLDMWSVGVIIYVSLSGTFPFNEDEDIHDQIQNAAFMYPPNPWKEISHEAIDLINNLLQVKMRKRYSVDKTLSHPWLQDYQTWLDLRELECRIGERYITHESDDSRWEQYAGEQGLQYPAHLISLSASHSDSPEAEEREMKALSERVSIL.

Y93 carries the phosphotyrosine modification. A Phorbol-ester/DAG-type 1 zinc finger spans residues 144 to 194; it reads PHALFVHSYRAPAFCDHCGEMLWGLVRQGLKCEGCGLNYHKRCAFKIPNNC. Phosphoserine is present on residues S203, S206, S217, and S221. The Phorbol-ester/DAG-type 2 zinc-finger motif lies at 276–326; sequence PHTFVIHSYTRPTVCQFCKKLLKGLFRQGLQCKDCRFNCHKRCAPKVPNNC. 2 disordered regions span residues 338-362 and 379-410; these read SPGA…NSGL and AEGQ…SNNI. Over residues 345–355 the composition is skewed to acidic residues; that stretch reads VVMEEGSDDND. Residue S351 is modified to Phosphoserine. Residues 400–410 show a composition bias toward polar residues; sequence RTISPSTSNNI. A phosphoserine; by MAPK13 mark is found at S403 and S407. The PH domain maps to 428–547; it reads TVMKEGWMVH…WEVAIQHALM (120 aa). Y438 bears the Phosphotyrosine mark. S454 carries the phosphoserine modification. The residue at position 469 (Y469) is a Phosphotyrosine; by ABL. Y508 is subject to Phosphotyrosine. A Phosphoserine modification is found at S554. The Protein kinase domain maps to 589 to 845; sequence IFPDEVLGSG…VDKTLSHPWL (257 aa). Residues 595-603 and K618 contribute to the ATP site; that span reads LGSGQFGIV. D712 acts as the Proton acceptor in catalysis. Position 744 is a phosphoserine; by PKC/PRKCD (S744). Phosphoserine; by autocatalysis and PKC/PRKCD is present on S748. At Y755 the chain carries Phosphotyrosine. Phosphoserine; by autocatalysis is present on S916.

The protein belongs to the protein kinase superfamily. CAMK Ser/Thr protein kinase family. PKD subfamily. As to quaternary structure, interacts (via N-terminus) with ADAP1/CENTA1. Interacts with MAPK13. Interacts with DAPK1 in an oxidative stress-regulated manner. Interacts with USP28; the interaction induces phosphorylation of USP28 and activated KRAS-mediated stabilization of ZNF304. Interacts with AKAP13 (via C-terminal domain). It depends on Mg(2+) as a cofactor. Phosphorylated at Ser-403 and Ser-407 by MAPK13 during regulation of insulin secretion in pancreatic beta cells. Phosphorylated by DAPK1. Phosphorylated at Tyr-93 and by ABL at Tyr-469, which primes the kinase in response to oxidative stress, and promotes a second step activating phosphorylation at Ser-744/Ser-748 by PKRD. Phosphorylated at Ser-916 upon S.enterica infection in macrophages.

It is found in the cytoplasm. The protein localises to the cell membrane. It localises to the golgi apparatus. The protein resides in the trans-Golgi network. It carries out the reaction L-seryl-[protein] + ATP = O-phospho-L-seryl-[protein] + ADP + H(+). It catalyses the reaction L-threonyl-[protein] + ATP = O-phospho-L-threonyl-[protein] + ADP + H(+). Its activity is regulated as follows. Activated by DAG and phorbol esters. Phorbol-ester/DAG-type domain 1 binds DAG with high affinity and appears to play the dominant role in mediating translocation to the cell membrane and trans-Golgi network. Phorbol-ester/DAG-type domain 2 binds phorbol ester with higher affinity. Autophosphorylation of Ser-748 and phosphorylation of Ser-744 by PKC relieves auto-inhibition by the PH domain. Phosphorylation on Tyr-469 by the SRC-ABL1 pathway in response to oxidative stress, is also required for activation. Activated by DAPK1 under oxidative stress. Its function is as follows. Serine/threonine-protein kinase that converts transient diacylglycerol (DAG) signals into prolonged physiological effects downstream of PKC, and is involved in the regulation of MAPK8/JNK1 and Ras signaling, Golgi membrane integrity and trafficking, cell survival through NF-kappa-B activation, cell migration, cell differentiation by mediating HDAC7 nuclear export, cell proliferation via MAPK1/3 (ERK1/2) signaling, and plays a role in cardiac hypertrophy, VEGFA-induced angiogenesis, genotoxic-induced apoptosis and flagellin-stimulated inflammatory response. Phosphorylates the epidermal growth factor receptor (EGFR) on dual threonine residues, which leads to the suppression of epidermal growth factor (EGF)-induced MAPK8/JNK1 activation and subsequent JUN phosphorylation. Phosphorylates RIN1, inducing RIN1 binding to 14-3-3 proteins YWHAB, YWHAE and YWHAZ and increased competition with RAF1 for binding to GTP-bound form of Ras proteins (NRAS, HRAS and KRAS). Acts downstream of the heterotrimeric G-protein beta/gamma-subunit complex to maintain the structural integrity of the Golgi membranes, and is required for protein transport along the secretory pathway. In the trans-Golgi network (TGN), regulates the fission of transport vesicles that are on their way to the plasma membrane. May act by activating the lipid kinase phosphatidylinositol 4-kinase beta (PI4KB) at the TGN for the local synthesis of phosphorylated inositol lipids, which induces a sequential production of DAG, phosphatidic acid (PA) and lyso-PA (LPA) that are necessary for membrane fission and generation of specific transport carriers to the cell surface. Under oxidative stress, is phosphorylated at Tyr-469 via SRC-ABL1 and contributes to cell survival by activating IKK complex and subsequent nuclear translocation and activation of NFKB1. Involved in cell migration by regulating integrin alpha-5/beta-3 recycling and promoting its recruitment in newly forming focal adhesion. In osteoblast differentiation, mediates the bone morphogenetic protein 2 (BMP2)-induced nuclear export of HDAC7, which results in the inhibition of HDAC7 transcriptional repression of RUNX2. In neurons, plays an important role in neuronal polarity by regulating the biogenesis of TGN-derived dendritic vesicles, and is involved in the maintenance of dendritic arborization and Golgi structure in hippocampal cells. May potentiate mitogenesis induced by the neuropeptide bombesin or vasopressin by mediating an increase in the duration of MAPK1/3 (ERK1/2) signaling, which leads to accumulation of immediate-early gene products including FOS that stimulate cell cycle progression. Plays an important role in the proliferative response induced by low calcium in keratinocytes, through sustained activation of MAPK1/3 (ERK1/2) pathway. Downstream of novel PKC signaling, plays a role in cardiac hypertrophy by phosphorylating HDAC5, which in turn triggers XPO1/CRM1-dependent nuclear export of HDAC5, MEF2A transcriptional activation and induction of downstream target genes that promote myocyte hypertrophy and pathological cardiac remodeling. Mediates cardiac troponin I (TNNI3) phosphorylation at the PKA sites, which results in reduced myofilament calcium sensitivity, and accelerated crossbridge cycling kinetics. The PRKD1-HDAC5 pathway is also involved in angiogenesis by mediating VEGFA-induced specific subset of gene expression, cell migration, and tube formation. In response to VEGFA, is necessary and required for HDAC7 phosphorylation which induces HDAC7 nuclear export and endothelial cell proliferation and migration. During apoptosis induced by cytarabine and other genotoxic agents, PRKD1 is cleaved by caspase-3 at Asp-378, resulting in activation of its kinase function and increased sensitivity of cells to the cytotoxic effects of genotoxic agents. In epithelial cells, is required for transducing flagellin-stimulated inflammatory responses by binding and phosphorylating TLR5, which contributes to MAPK14/p38 activation and production of inflammatory cytokines. Acts as an activator of NLRP3 inflammasome assembly by mediating phosphorylation of NLRP3. May play a role in inflammatory response by mediating activation of NF-kappa-B. May be involved in pain transmission by directly modulating TRPV1 receptor. Plays a role in activated KRAS-mediated stabilization of ZNF304 in colorectal cancer (CRC) cells. Regulates nuclear translocation of transcription factor TFEB in macrophages upon live S.enterica infection. The chain is Serine/threonine-protein kinase D1 (Prkd1) from Mus musculus (Mouse).